A 197-amino-acid chain; its full sequence is GCN5-related N-acetyltransferase 1, chloroplastic (197 aa).

The N-terminal 37 residues, 1–37 (MFLGGTISTPPASLRLRSTLNPQNAVTQSSSQATFPA), are a transit peptide targeting the chloroplast. The segment covering 23-34 (QNAVTQSSSQAT) has biased composition (polar residues). The disordered stretch occupies residues 23-46 (QNAVTQSSSQATFPAAMQRKPPSY). The region spanning 58-195 (FLLRRTTEGL…GMVFIRKQRN (138 aa)) is the N-acetyltransferase domain. Acetyl-CoA is bound by residues 129 to 131 (VVV), 137 to 142 (SCGLGK), 165 to 167 (EPR), and Y172. Y172 serves as the catalytic Proton donor.

The protein belongs to the acetyltransferase family. GNAT subfamily. As to quaternary structure, oligomer. Autoacetylated. As to expression, expressed in green tissues. Accumulates mainly in flowers and young leaves, and, to a lower extent, in stems and mature leaves, but barely in roots.

Its subcellular location is the plastid. It is found in the chloroplast. It carries out the reaction an N-terminal L-alpha-aminoacyl-[protein] + acetyl-CoA = N-terminal N(alpha)-acetyl-L-alpha-aminoacyl-[protein] + CoA + H(+). It catalyses the reaction L-lysyl-[protein] + acetyl-CoA = N(6)-acetyl-L-lysyl-[protein] + CoA + H(+). The enzyme catalyses 5-methoxytryptamine + acetyl-CoA = melatonin + CoA + H(+). The catalysed reaction is serotonin + acetyl-CoA = N-acetylserotonin + CoA + H(+). Its activity is regulated as follows. Inhibited by 5-methoxytryptamine in vitro. Functionally, protein acetyltransferase with dual specificity triggering both N-alpha-acetylation (NTA) and epsilon-lysine acetylation (KA), possibly with a low efficiency or toward specific plastid substrates. Involved in melatonin biosynthesis by catalyzing the formation of N-acetylserotonin (NAS) from serotonin and of melatonin (N-acetyl-5-methoxytryptamine) from 5-methoxytryptamine (5-MT). The chain is GCN5-related N-acetyltransferase 1, chloroplastic from Arabidopsis thaliana (Mouse-ear cress).